We begin with the raw amino-acid sequence, 609 residues long: Thiamine metabolism regulatory protein THI3 (609 aa).

The interval 578–598 (SKQVQEENENSSAVNTPTPEF) is disordered.

This sequence belongs to the TPP enzyme family. Mg(2+) serves as cofactor. The cofactor is thiamine diphosphate.

Its subcellular location is the nucleus. The catalysed reaction is 4-methyl-2-oxopentanoate + H(+) = 3-methylbutanal + CO2. It catalyses the reaction (S)-3-methyl-2-oxopentanoate + H(+) = 2-methylbutanal + CO2. It participates in amino-acid degradation; Ehrlich pathway. Its function is as follows. One of five 2-oxo acid decarboxylases (PDC1, PDC5, PDC6, ARO10, and THI3) involved in amino acid catabolism. The enzyme catalyzes the decarboxylation of amino acids, which, in a first step, have been transaminated to the corresponding 2-oxo acids (alpha-keto-acids). In a third step, the resulting aldehydes are reduced to alcohols, collectively referred to as fusel oils or alcohols. Its preferred substrates are the transaminated amino acids derived from leucine (4-methyl-2-oxopentanoate, also alpha-keto-isocaproate) and isoleucine ((3S)-3-methyl-2-oxopentanoate, also alpha-keto-beta-methylvalerate), whereas transaminated valine, transaminated aromatic amino acids, and pyruvate are no substrates. In analogy to the pyruvate decarboxylases the enzyme may in a side-reaction catalyze condensation (or carboligation) reactions leading to the formation of 2-hydroxy ketone, collectively called acyloins. The enzyme is also positively regulating the thiamine metabolism by a molecular mechanism that may involve thiamine concentration sensing and signal transmission. In Saccharomyces cerevisiae (strain ATCC 204508 / S288c) (Baker's yeast), this protein is Thiamine metabolism regulatory protein THI3 (THI3).